A 123-amino-acid polypeptide reads, in one-letter code: Holo-[acyl-carrier-protein] synthase (123 aa).

2 residues coordinate Mg(2+): D8 and E60.

Belongs to the P-Pant transferase superfamily. AcpS family. The cofactor is Mg(2+).

The protein resides in the cytoplasm. The catalysed reaction is apo-[ACP] + CoA = holo-[ACP] + adenosine 3',5'-bisphosphate + H(+). Its function is as follows. Transfers the 4'-phosphopantetheine moiety from coenzyme A to a Ser of acyl-carrier-protein. This Ehrlichia ruminantium (strain Welgevonden) protein is Holo-[acyl-carrier-protein] synthase.